A 363-amino-acid chain; its full sequence is 5-formaminoimidazole-4-carboxamide-1-(beta)-D-ribofuranosyl 5'-monophosphate synthetase (363 aa).

5-amino-1-(5-phospho-beta-D-ribosyl)imidazole-4-carboxamide-binding residues include His29 and Ser96. An ATP-grasp domain is found at 118 to 350; sequence RDILRWESER…MGRRVAREIR (233 aa). ATP-binding positions include 148–210 and Glu232; that span reads PEEI…TNFC. 5-amino-1-(5-phospho-beta-D-ribosyl)imidazole-4-carboxamide is bound at residue Asn260. Positions 299 and 312 each coordinate Mg(2+).

It belongs to the phosphohexose mutase family. Requires Mg(2+) as cofactor. Mn(2+) serves as cofactor.

It catalyses the reaction 5-amino-1-(5-phospho-beta-D-ribosyl)imidazole-4-carboxamide + formate + ATP = 5-formamido-1-(5-phospho-D-ribosyl)imidazole-4-carboxamide + ADP + phosphate. It functions in the pathway purine metabolism; IMP biosynthesis via de novo pathway; 5-formamido-1-(5-phospho-D-ribosyl)imidazole-4-carboxamide from 5-amino-1-(5-phospho-D-ribosyl)imidazole-4-carboxamide (formate route): step 1/1. Catalyzes the ATP- and formate-dependent formylation of 5-aminoimidazole-4-carboxamide-1-beta-d-ribofuranosyl 5'-monophosphate (AICAR) to 5-formaminoimidazole-4-carboxamide-1-beta-d-ribofuranosyl 5'-monophosphate (FAICAR) in the absence of folates. This Methanothermobacter thermautotrophicus (strain ATCC 29096 / DSM 1053 / JCM 10044 / NBRC 100330 / Delta H) (Methanobacterium thermoautotrophicum) protein is 5-formaminoimidazole-4-carboxamide-1-(beta)-D-ribofuranosyl 5'-monophosphate synthetase.